We begin with the raw amino-acid sequence, 433 residues long: Protein translocase subunit SecY (433 aa).

Transmembrane regions (helical) follow at residues 17 to 37 (IVFT…PIPG), 71 to 91 (IFAL…LMSV), 117 to 137 (LTVL…ESIV), 141 to 161 (GPVV…TLVV), 184 to 204 (LIIF…MFEL), 212 to 232 (PLIA…IIFF), 268 to 288 (GVIP…LANF), 310 to 330 (YILL…AIVF), 366 to 386 (LTVI…LLMN), and 388 to 408 (YVIS…VVLD).

It belongs to the SecY/SEC61-alpha family. In terms of assembly, component of the Sec protein translocase complex. Heterotrimer consisting of SecY, SecE and SecG subunits. The heterotrimers can form oligomers, although 1 heterotrimer is thought to be able to translocate proteins. Interacts with the ribosome. Interacts with SecDF, and other proteins may be involved. Interacts with SecA.

It localises to the cell inner membrane. Functionally, the central subunit of the protein translocation channel SecYEG. Consists of two halves formed by TMs 1-5 and 6-10. These two domains form a lateral gate at the front which open onto the bilayer between TMs 2 and 7, and are clamped together by SecE at the back. The channel is closed by both a pore ring composed of hydrophobic SecY resides and a short helix (helix 2A) on the extracellular side of the membrane which forms a plug. The plug probably moves laterally to allow the channel to open. The ring and the pore may move independently. The protein is Protein translocase subunit SecY of Rickettsia felis (strain ATCC VR-1525 / URRWXCal2) (Rickettsia azadi).